A 342-amino-acid chain; its full sequence is tRNA-specific 2-thiouridylase MnmA (342 aa).

ATP is bound by residues 6–13 (LLSGGVDS) and Leu32. Catalysis depends on Cys92, which acts as the Nucleophile. Cysteines 92 and 191 form a disulfide. Position 116 (Gly116) interacts with ATP. The tract at residues 138 to 140 (KDQ) is interaction with tRNA. Cys191 acts as the Cysteine persulfide intermediate in catalysis. Residues 293-294 (RY) are interaction with tRNA.

This sequence belongs to the MnmA/TRMU family.

The protein resides in the cytoplasm. It catalyses the reaction S-sulfanyl-L-cysteinyl-[protein] + uridine(34) in tRNA + AH2 + ATP = 2-thiouridine(34) in tRNA + L-cysteinyl-[protein] + A + AMP + diphosphate + H(+). Its function is as follows. Catalyzes the 2-thiolation of uridine at the wobble position (U34) of tRNA, leading to the formation of s(2)U34. The polypeptide is tRNA-specific 2-thiouridylase MnmA (Helicobacter pylori (strain G27)).